A 267-amino-acid polypeptide reads, in one-letter code: Tryptophan synthase alpha chain (267 aa).

Catalysis depends on proton acceptor residues Glu49 and Asp60.

This sequence belongs to the TrpA family. As to quaternary structure, tetramer of two alpha and two beta chains.

It catalyses the reaction (1S,2R)-1-C-(indol-3-yl)glycerol 3-phosphate + L-serine = D-glyceraldehyde 3-phosphate + L-tryptophan + H2O. Its pathway is amino-acid biosynthesis; L-tryptophan biosynthesis; L-tryptophan from chorismate: step 5/5. Functionally, the alpha subunit is responsible for the aldol cleavage of indoleglycerol phosphate to indole and glyceraldehyde 3-phosphate. In Citrifermentans bemidjiense (strain ATCC BAA-1014 / DSM 16622 / JCM 12645 / Bem) (Geobacter bemidjiensis), this protein is Tryptophan synthase alpha chain.